Here is a 443-residue protein sequence, read N- to C-terminus: MSLKHPTIAVSAPGKVFLAGGYLVLDQEYTAFVFGLNARINIIAGDIHTTAGVQLTEIVVDSPQFLDAQWRYGYHLAGEGGGIKVTQLQVGAQINPNPFVETTLSYALTYIDRVAGHRPSHSLASARLIILADNDYYSHSESDTTRSGRFAKFPVTLSNANKTGLGSSAALVTSLTASLLVHYLPEDLFSIDSDKGKRTLHNLAQAAHCAAQGKVGSGFDVATAVYGSCRYRRFSPATLNKIPEPGVAGFADALVKLVDGESEWDVEVLKDAVTMPKGVVLRMCDVDCGSKTVGMVKKVLAWKSSNPEDSKTLWDELQSRNEQLIATLNAGDVAQLPEKINAVREKIREMGSASDVPIEPESQTELLDALSTVEGVHGGVVPGAGGYDALALLMKDDEETKQRVEVFLEKWAAEKGTKVKLLAVKGEMEGVRSESLDVYAGWV.

An ATP-binding site is contributed by 160–170 (ANKTGLGSSAA).

This sequence belongs to the GHMP kinase family. Mevalonate kinase subfamily.

It catalyses the reaction (R)-5-phosphomevalonate + ATP = (R)-5-diphosphomevalonate + ADP. It functions in the pathway isoprenoid biosynthesis; isopentenyl diphosphate biosynthesis via mevalonate pathway; isopentenyl diphosphate from (R)-mevalonate: step 2/3. Phosphomevalonate kinase; part of the second module of ergosterol biosynthesis pathway that includes the middle steps of the pathway. ERG8 converts 5-phosphomevalonate to 5-diphosphomevalonate. The second module is carried out in the vacuole and involves the formation of farnesyl diphosphate, which is also an important intermediate in the biosynthesis of ubiquinone, dolichol, heme and prenylated proteins. Activity by the mevalonate kinase ERG12 (FG05912) first converts mevalonate into 5-phosphomevalonate. 5-phosphomevalonate is then further converted to 5-diphosphomevalonate by the phosphomevalonate kinase ERG8 (FG09764). The diphosphomevalonate decarboxylase ERG19 (FG10424) then produces isopentenyl diphosphate. The isopentenyl-diphosphate delta-isomerase IDI1 (FG09722) then catalyzes the 1,3-allylic rearrangement of the homoallylic substrate isopentenyl (IPP) to its highly electrophilic allylic isomer, dimethylallyl diphosphate (DMAPP). Finally the farnesyl diphosphate synthase ERG20 (FG06784) catalyzes the sequential condensation of isopentenyl pyrophosphate with dimethylallyl pyrophosphate, and then with the resultant geranylpyrophosphate to the ultimate product farnesyl pyrophosphate. The chain is Phosphomevalonate kinase ERG8 from Gibberella zeae (strain ATCC MYA-4620 / CBS 123657 / FGSC 9075 / NRRL 31084 / PH-1) (Wheat head blight fungus).